The following is a 232-amino-acid chain: Orotidine 5'-phosphate decarboxylase (232 aa).

Substrate is bound by residues Asp-11, Lys-33, 61–70, Thr-116, Arg-179, Gln-188, Gly-208, and Arg-209; that span reads DMKLFDIGAT. Lys-63 acts as the Proton donor in catalysis.

This sequence belongs to the OMP decarboxylase family. Type 1 subfamily. As to quaternary structure, homodimer.

It carries out the reaction orotidine 5'-phosphate + H(+) = UMP + CO2. The protein operates within pyrimidine metabolism; UMP biosynthesis via de novo pathway; UMP from orotate: step 2/2. In terms of biological role, catalyzes the decarboxylation of orotidine 5'-monophosphate (OMP) to uridine 5'-monophosphate (UMP). The sequence is that of Orotidine 5'-phosphate decarboxylase from Cereibacter sphaeroides (strain ATCC 17023 / DSM 158 / JCM 6121 / CCUG 31486 / LMG 2827 / NBRC 12203 / NCIMB 8253 / ATH 2.4.1.) (Rhodobacter sphaeroides).